We begin with the raw amino-acid sequence, 354 residues long: L-lactate dehydrogenase (354 aa).

NAD(+) is bound by residues 73 to 78 (DAVPDK) and Arg-120. Arg-127, Asn-159, and Arg-190 together coordinate substrate. Residue Asn-159 participates in NAD(+) binding. The active-site Proton acceptor is His-214. Substrate is bound at residue Thr-269. A disordered region spans residues 302-332 (HGIPDGTTSSSACPPRRPRRRPGRREMELTE).

Belongs to the LDH/MDH superfamily. LDH family. Homotetramer.

It carries out the reaction (S)-lactate + NAD(+) = pyruvate + NADH + H(+). It functions in the pathway fermentation; pyruvate fermentation to lactate; (S)-lactate from pyruvate: step 1/1. This Zea mays (Maize) protein is L-lactate dehydrogenase.